A 177-amino-acid polypeptide reads, in one-letter code: Large ribosomal subunit protein uL10 (177 aa).

The protein belongs to the universal ribosomal protein uL10 family. As to quaternary structure, part of the ribosomal stalk of the 50S ribosomal subunit. The N-terminus interacts with L11 and the large rRNA to form the base of the stalk. The C-terminus forms an elongated spine to which L12 dimers bind in a sequential fashion forming a multimeric L10(L12)X complex.

Functionally, forms part of the ribosomal stalk, playing a central role in the interaction of the ribosome with GTP-bound translation factors. The chain is Large ribosomal subunit protein uL10 from Variovorax paradoxus (strain S110).